Here is a 105-residue protein sequence, read N- to C-terminus: Small ribosomal subunit protein uS10 (105 aa).

Belongs to the universal ribosomal protein uS10 family. Part of the 30S ribosomal subunit.

Its function is as follows. Involved in the binding of tRNA to the ribosomes. The polypeptide is Small ribosomal subunit protein uS10 (Aster yellows witches'-broom phytoplasma (strain AYWB)).